Consider the following 389-residue polypeptide: Na(+)/H(+) antiporter NhaA (389 aa).

A run of 10 helical transmembrane segments spans residues 8–28 (INFLQEFSIPLILGVLIALVW), 48–68 (ISLHFFVNDIFMVFFFAMAAI), 91–111 (MATLGGVLGPALVFLGLNALI), 119–139 (GWGIPTATDIALAWLVARVVF), 173–193 (NPVAPLWLLLTVAGMLVAYLL), 214–234 (AGLYLAHIHPALALVFIVPFL), 262–282 (WKIFVDFGLLLFGLTNAGVEF), 288–308 (LTWLVLIALVGGKTIGIFLMG), 327–347 (LLVAGVIAAMGLTVALFVSGV), and 361–381 (GALFSAVAAVIAFALGKVLGI).

It belongs to the NhaA Na(+)/H(+) (TC 2.A.33) antiporter family.

Its subcellular location is the cell membrane. It catalyses the reaction Na(+)(in) + 2 H(+)(out) = Na(+)(out) + 2 H(+)(in). Na(+)/H(+) antiporter that extrudes sodium in exchange for external protons. In Desulfitobacterium hafniense (strain DSM 10664 / DCB-2), this protein is Na(+)/H(+) antiporter NhaA.